The sequence spans 84 residues: Small ribosomal subunit protein bS20 (84 aa).

The protein belongs to the bacterial ribosomal protein bS20 family.

Binds directly to 16S ribosomal RNA. This Lacticaseibacillus casei (strain BL23) (Lactobacillus casei) protein is Small ribosomal subunit protein bS20.